The chain runs to 109 residues: Fluoride-specific ion channel FluC 1 (109 aa).

Helical transmembrane passes span 1 to 21 (MVIVYLAIACGLGALVRYFFS), 29 to 49 (LPLGTLIANLLGCFLIGVFYN), 55 to 75 (EVYAILATGFCGGLTTFSTLN), and 87 to 107 (VFYSYLTLTYIGGLVAIFLGI). Na(+)-binding residues include G66 and T69.

It belongs to the fluoride channel Fluc/FEX (TC 1.A.43) family.

It localises to the cell membrane. The catalysed reaction is fluoride(in) = fluoride(out). With respect to regulation, na(+) is not transported, but it plays an essential structural role and its presence is essential for fluoride channel function. In terms of biological role, fluoride-specific ion channel. Important for reducing fluoride concentration in the cell, thus reducing its toxicity. This chain is Fluoride-specific ion channel FluC 1, found in Streptococcus pneumoniae serotype 4 (strain ATCC BAA-334 / TIGR4).